The primary structure comprises 733 residues: DNA-binding protein SATB2 (733 aa).

The tract at residues 1–47 (MERRSESPCLRDSPDRRSGSPDVKGPPPVKVARLEQNGSPMGARGRP) is disordered. Serine 20 carries the phosphoserine modification. Glycyl lysine isopeptide (Lys-Gly) (interchain with G-Cter in SUMO2) cross-links involve residues lysine 24 and lysine 30. Residue serine 39 is modified to Phosphoserine. The CMP domain maps to 57–158 (GLMIPVFCVV…VVTLKIQLQS (102 aa)). Lysine 161 participates in a covalent cross-link: Glycyl lysine isopeptide (Lys-Gly) (interchain with G-Cter in SUMO2). The region spanning 161 to 234 (KLEDLPAEQW…WYKKYKKIKV (74 aa)) is the CUTL domain. A Glycyl lysine isopeptide (Lys-Gly) (interchain with G-Cter in SUMO) cross-link involves residue lysine 233. A Glycyl lysine isopeptide (Lys-Gly) (interchain with G-Cter in SUMO); alternate cross-link involves residue lysine 350. Lysine 350 is covalently cross-linked (Glycyl lysine isopeptide (Lys-Gly) (interchain with G-Cter in SUMO2); alternate). The segment at residues 350–437 (KPEPTNSSVE…ERDRIYQDER (88 aa)) is a DNA-binding region (CUT 1). The tract at residues 435 to 473 (DERERSMNPNVSMVSSASSSPSSSRTPQAKTSTPTTDLP) is disordered. Residues 441–458 (MNPNVSMVSSASSSPSSS) are compositionally biased toward low complexity. Phosphoserine is present on serine 454. Over residues 459-470 (RTPQAKTSTPTT) the composition is skewed to polar residues. Threonine 467 is subject to Phosphothreonine. The CUT 2 DNA-binding region spans 473–560 (PIKVDGANIN…ERDVIYEEES (88 aa)). A Glycyl lysine isopeptide (Lys-Gly) (interchain with G-Cter in SUMO2) cross-link involves residue lysine 475. A compositionally biased stretch (low complexity) spans 580–593 (QVLHRQQSQPAKES). Disordered stretches follow at residues 580-617 (QVLH…KPRS) and 694-733 (LLTE…IDQR). A Phosphoserine modification is found at serine 594. Residues 615 to 674 (PRSRTKISLEALGILQSFIHDVGLYPDQEAIHTLSAQLDLPKHTIIKFFQNQRYHVKHHG) constitute a DNA-binding region (homeobox). Positions 694-708 (LLTESEENDSEEGSE) are enriched in acidic residues. The segment covering 709 to 733 (EMYKVEAEEENADKSKAAPAEIDQR) has biased composition (basic and acidic residues). Lysine 724 participates in a covalent cross-link: Glycyl lysine isopeptide (Lys-Gly) (interchain with G-Cter in SUMO2).

The protein belongs to the CUT homeobox family. In terms of assembly, interacts with ATF4 and RUNX2; resulting in enhanced DNA binding and transactivation by these transcription factors. Interacts with PIAS1. Sumoylated by PIAS1. Sumoylation promotes nuclear localization, but represses transcription factor activity. High expression in adult brain, moderate expression in fetal brain, and weak expression in adult liver, kidney, and spinal cord and in select brain regions, including amygdala, corpus callosum, caudate nucleus, and hippocampus.

It localises to the nucleus matrix. Its function is as follows. Binds to DNA, at nuclear matrix- or scaffold-associated regions. Thought to recognize the sugar-phosphate structure of double-stranded DNA. Transcription factor controlling nuclear gene expression, by binding to matrix attachment regions (MARs) of DNA and inducing a local chromatin-loop remodeling. Acts as a docking site for several chromatin remodeling enzymes and also by recruiting corepressors (HDACs) or coactivators (HATs) directly to promoters and enhancers. Required for the initiation of the upper-layer neurons (UL1) specific genetic program and for the inactivation of deep-layer neurons (DL) and UL2 specific genes, probably by modulating BCL11B expression. Repressor of Ctip2 and regulatory determinant of corticocortical connections in the developing cerebral cortex. May play an important role in palate formation. Acts as a molecular node in a transcriptional network regulating skeletal development and osteoblast differentiation. In Homo sapiens (Human), this protein is DNA-binding protein SATB2 (SATB2).